Consider the following 365-residue polypeptide: MKKTALYHWHEQAGARIIDFGGYLMPVQYSGIIAEHRAVRSAAGLFDVSHMGNFYVTGERSEAFLQYMVTNDLSKVRDGEAQYNLMLYPNGGVVDDLIIYRLDSKTFFLIVNASNTEKDYAWLQQHIGAFDGVCLEDHTDRLSLIALQGPVAIDIVKTVFPSVDFDALLQFQFCRTLYGDAPVMIARTGYTGEKGVEICLPNEAALPLWEALYDAGRACGISPVGLGARDTLRLEMGYSLYGHEIDQDINPLEARLKWAVKMDKGSFIGREACQQVELHLTRGVAGFSIESRVLPRQHCKVYNTDRQEIGWVCSGTLSPTLQEPIGTCNIVRKYITSGDSVFVDVRGTLHKGEIRRLPFVKTSLG.

Belongs to the GcvT family. As to quaternary structure, the glycine cleavage system is composed of four proteins: P, T, L and H.

The enzyme catalyses N(6)-[(R)-S(8)-aminomethyldihydrolipoyl]-L-lysyl-[protein] + (6S)-5,6,7,8-tetrahydrofolate = N(6)-[(R)-dihydrolipoyl]-L-lysyl-[protein] + (6R)-5,10-methylene-5,6,7,8-tetrahydrofolate + NH4(+). Functionally, the glycine cleavage system catalyzes the degradation of glycine. This Chlorobium phaeobacteroides (strain DSM 266 / SMG 266 / 2430) protein is Aminomethyltransferase.